A 319-amino-acid polypeptide reads, in one-letter code: ATP-dependent 6-phosphofructokinase (319 aa).

Gly-11 serves as a coordination point for ATP. An ADP-binding site is contributed by 21 to 25 (RAVVR). Residues 72-73 (RC) and 102-105 (GDGS) contribute to the ATP site. Residue Asp-103 participates in Mg(2+) binding. 125-127 (TID) lines the substrate pocket. Asp-127 (proton acceptor) is an active-site residue. Arg-154 contacts ADP. Residues Arg-162 and 169 to 171 (MGR) each bind substrate. ADP contacts are provided by residues 185 to 187 (GAE), Arg-211, and 213 to 215 (KKH). Residues Glu-222, Arg-243, and 249–252 (HVQR) each bind substrate.

This sequence belongs to the phosphofructokinase type A (PFKA) family. ATP-dependent PFK group I subfamily. Prokaryotic clade 'B1' sub-subfamily. In terms of assembly, homotetramer. Mg(2+) serves as cofactor.

The protein localises to the cytoplasm. The enzyme catalyses beta-D-fructose 6-phosphate + ATP = beta-D-fructose 1,6-bisphosphate + ADP + H(+). The protein operates within carbohydrate degradation; glycolysis; D-glyceraldehyde 3-phosphate and glycerone phosphate from D-glucose: step 3/4. Its activity is regulated as follows. Allosterically activated by ADP and other diphosphonucleosides, and allosterically inhibited by phosphoenolpyruvate. Catalyzes the phosphorylation of D-fructose 6-phosphate to fructose 1,6-bisphosphate by ATP, the first committing step of glycolysis. In Bacillus anthracis (strain A0248), this protein is ATP-dependent 6-phosphofructokinase.